An 83-amino-acid polypeptide reads, in one-letter code: Exodeoxyribonuclease 7 small subunit (83 aa).

This sequence belongs to the XseB family. In terms of assembly, heterooligomer composed of large and small subunits.

The protein localises to the cytoplasm. It catalyses the reaction Exonucleolytic cleavage in either 5'- to 3'- or 3'- to 5'-direction to yield nucleoside 5'-phosphates.. Its function is as follows. Bidirectionally degrades single-stranded DNA into large acid-insoluble oligonucleotides, which are then degraded further into small acid-soluble oligonucleotides. The protein is Exodeoxyribonuclease 7 small subunit of Brucella melitensis biotype 1 (strain ATCC 23456 / CCUG 17765 / NCTC 10094 / 16M).